A 189-amino-acid polypeptide reads, in one-letter code: PTS system glucose-specific EIIA component (189 aa).

A PTS EIIA type-1 domain is found at 31-135 (DEAFAEKIVG…SVITPVVIAN (105 aa)). Zn(2+) contacts are provided by histidine 68 and histidine 83. The active-site Tele-phosphohistidine intermediate; for EIIA activity is histidine 83. At histidine 83 the chain carries Phosphohistidine; by HPr.

In terms of assembly, heterodimer with glycerol kinase (glpk). The cofactor is Zn(2+).

It localises to the cytoplasm. The phosphoenolpyruvate-dependent sugar phosphotransferase system (sugar PTS), a major carbohydrate active transport system, catalyzes the phosphorylation of incoming sugar substrates concomitantly with their translocation across the cell membrane. The enzyme II complex composed of PtsG and Crr is involved in glucose transport. The polypeptide is PTS system glucose-specific EIIA component (crr) (Borreliella burgdorferi (strain ATCC 35210 / DSM 4680 / CIP 102532 / B31) (Borrelia burgdorferi)).